Consider the following 1184-residue polypeptide: MSGSSAGSSFVHLHNHTEYSMLDGAAKITPMLAEVERLGMPAVGMTDHGNMFGASEFYNSATKAGIKPIIGVEAYIAPGSRFDTRRILWGDPSQKADDVSGSGSYTHLTMMAENATGLRNLFKLSSHASFEGQLSKWSRMDAELIAEHAEGIIITTGCPSGEVQTRLRLGQDREALEAAAKWREIVGPDNYFLELMDHGLTIERRVRDGLLEIGRALNIPPLATNDCHYVTRDAAHNHEALLCVQTGKTLSDPNRFKFDGDGYYLKSAAEMRQIWDDEVPGACDSTLLIAERVQSYADVWTPRDRMPVFPVPDGHDQASWLRHEVDAGLRRRFPAGPPDGYRERAAYEIDVICSKGFPSYFLIVADLISYARSAGIRVGPGRGSAAGSLVAYALGITDIDPIPHGLLFERFLNPERTSMPDIDIDFDDRRRGEMVRYAADKWGHDRVAQVITFGTIKTKAALKDSARIHYGQPGFAIADRITKALPPAIMAKDIPLSGITDPSHERYKEAAEVRGLIETDPDVRTIYQTARGLEGLIRNAGVHACAVIMSSEPLTEAIPLWKRPQDGAIITGWDYPACEAIGLLKMDFLGLRNLTIIGDAIDNVRANRGIDLDLESVPLDDKATYELLGRGDTLGVFQLDGGPMRDLLRRMQPTGFEDVVAVIALYRPGPMGMNAHNDYADRKNNRQAIKPIHPELEEPLREILAETYGLIVYQEQIMRIAQKVASYSLARADILRKAMGKKKREVLEKEFEGFSDGMQANGFSPAAIKALWDTILPFADYAFNKSHAAGYGMVSYWTAYLKANYPAEYMAGLLTSVGDDKDKAAVYLADCRKLGITVLPPDVNESGLNFASVGQDIRYGLGAVRNVGANVVGSLLQTRNDKGKFTDFSDYLNKIDISACNKKVTESLIKAGAFDSLGHARKGLFLVHSDAVDSVLGTKKAEALGQFDLFGSNDDGTGTADPVFTIKVPDDEWEDKHKLALEREMLGLYVSGHPLNGVAHLLAAQVDTAIPAILDGDVPNDAQVRVGGILASVNRRVNKNGMPWASAQLEDLTGGIEVMFFPHTYSSYGADIVDDAVVLVNAKVAVRDDRIALIANDLTVPDFSNAEVERPLAVSLPTRQCTFDKVSALKQVLARHPGTSQVHLRLISGDRITTLALDQSLRVTPSPALMGDLKELLGPGCLGS.

Belongs to the DNA polymerase type-C family. DnaE subfamily. The Pol III holoenzyme complex contains at least 10 different subunits organized into 3 functionally essential subassemblies: the Pol III core, the beta sliding clamp processivity factor and the clamp-loading complex. The Pol III core (subunits alpha, epsilon and theta) contains the polymerase and the 3'-5' exonuclease proofreading activities. The polymerase is tethered to the template via the dimeric beta sliding clamp processivity factor. The clamp loader (also called gamma complex) assembles the beta sliding clamp onto the primed template and plays a central role in the organization and communication at the replication fork. The clamp-loading complex contains delta, delta', psi and chi, and 3 copies of either or both of two different DnaX proteins, gamma and tau. The DNA replisome complex has a single clamp loader (3 tau and 1 each of delta, delta', psi and chi subunits) which binds 3 Pol III cores (1 core on the leading strand and 2 on the lagging strand) each with a beta sliding clamp dimer. Interacts with the beta-sliding clamp (DnaN). Co-immunoprecipitates with DarG in the presence and absence of darT.

The protein localises to the cytoplasm. It carries out the reaction DNA(n) + a 2'-deoxyribonucleoside 5'-triphosphate = DNA(n+1) + diphosphate. DNA polymerase III is a complex, multichain enzyme responsible for most of the replicative synthesis in bacteria. Pol III also exhibits 3' to 5' exonuclease activity. The alpha chain is the DNA polymerase. In Mycobacterium tuberculosis (strain ATCC 25618 / H37Rv), this protein is DNA polymerase III subunit alpha (dnaE1).